Here is a 111-residue protein sequence, read N- to C-terminus: Ribosome-binding factor A (111 aa).

The protein belongs to the RbfA family. In terms of assembly, monomer. Binds 30S ribosomal subunits, but not 50S ribosomal subunits or 70S ribosomes.

It localises to the cytoplasm. Functionally, one of several proteins that assist in the late maturation steps of the functional core of the 30S ribosomal subunit. Associates with free 30S ribosomal subunits (but not with 30S subunits that are part of 70S ribosomes or polysomes). Required for efficient processing of 16S rRNA. May interact with the 5'-terminal helix region of 16S rRNA. This Helicobacter pylori (strain ATCC 700392 / 26695) (Campylobacter pylori) protein is Ribosome-binding factor A.